Consider the following 211-residue polypeptide: Peptide methionine sulfoxide reductase MsrA (211 aa).

C52 is an active-site residue.

It belongs to the MsrA Met sulfoxide reductase family.

The enzyme catalyses L-methionyl-[protein] + [thioredoxin]-disulfide + H2O = L-methionyl-(S)-S-oxide-[protein] + [thioredoxin]-dithiol. It carries out the reaction [thioredoxin]-disulfide + L-methionine + H2O = L-methionine (S)-S-oxide + [thioredoxin]-dithiol. In terms of biological role, has an important function as a repair enzyme for proteins that have been inactivated by oxidation. Catalyzes the reversible oxidation-reduction of methionine sulfoxide in proteins to methionine. The sequence is that of Peptide methionine sulfoxide reductase MsrA from Photobacterium profundum (strain SS9).